The sequence spans 90 residues: Probable Fe(2+)-trafficking protein (90 aa).

Belongs to the Fe(2+)-trafficking protein family. As to quaternary structure, monomer.

Could be a mediator in iron transactions between iron acquisition and iron-requiring processes, such as synthesis and/or repair of Fe-S clusters in biosynthetic enzymes. This chain is Probable Fe(2+)-trafficking protein, found in Yersinia pseudotuberculosis serotype O:1b (strain IP 31758).